Here is a 305-residue protein sequence, read N- to C-terminus: Tyrosine recombinase XerC (305 aa).

Residues 1–93 (MVLDGFAAHF…SWRQYCVWLV (93 aa)) enclose the Core-binding (CB) domain. The 181-residue stretch at 114 to 294 (RVPKALPQEW…DFDHIARLYD (181 aa)) folds into the Tyr recombinase domain. Residues Arg155, Lys179, His246, Arg249, and His272 contribute to the active site. Residue Tyr281 is the O-(3'-phospho-DNA)-tyrosine intermediate of the active site.

This sequence belongs to the 'phage' integrase family. XerC subfamily. In terms of assembly, forms a cyclic heterotetrameric complex composed of two molecules of XerC and two molecules of XerD.

It is found in the cytoplasm. In terms of biological role, site-specific tyrosine recombinase, which acts by catalyzing the cutting and rejoining of the recombining DNA molecules. The XerC-XerD complex is essential to convert dimers of the bacterial chromosome into monomers to permit their segregation at cell division. It also contributes to the segregational stability of plasmids. This Neisseria meningitidis serogroup C (strain 053442) protein is Tyrosine recombinase XerC.